We begin with the raw amino-acid sequence, 232 residues long: Aspartate racemase (232 aa).

49 to 51 (DRT) contacts substrate. The active-site Proton donor/acceptor is Cys-84. Substrate is bound by residues 85-87 (NTA) and Lys-166. Cys-195 acts as the Proton donor/acceptor in catalysis.

This sequence belongs to the aspartate/glutamate racemases family.

It catalyses the reaction L-aspartate = D-aspartate. This is Aspartate racemase from Thermococcus sp. (strain KS-8).